A 165-amino-acid polypeptide reads, in one-letter code: UPF0254 protein MmarC7_0182 (165 aa).

Belongs to the UPF0254 family.

The sequence is that of UPF0254 protein MmarC7_0182 from Methanococcus maripaludis (strain C7 / ATCC BAA-1331).